Here is a 220-residue protein sequence, read N- to C-terminus: MTVLPRVAIGLFGGSFDPVHEGHLRLARALRDELQLAEVRLLPAGTPPHRAPLAAAAADRLAMLRLALAGEPGLTVDERELSGRLSGYTVDTLAMIRRETGPEAALWWLVGGDQLASLDRWHRWRDLFGLAHLAVAVRPGFDAGSLPPAVAAEWQARQATDFANLPPAGRIRALSLSPVDISATAIRADLARGGDGLGHLAPAVRDYIHLHRLYRSESPA.

This sequence belongs to the NadD family.

It carries out the reaction nicotinate beta-D-ribonucleotide + ATP + H(+) = deamido-NAD(+) + diphosphate. It participates in cofactor biosynthesis; NAD(+) biosynthesis; deamido-NAD(+) from nicotinate D-ribonucleotide: step 1/1. Catalyzes the reversible adenylation of nicotinate mononucleotide (NaMN) to nicotinic acid adenine dinucleotide (NaAD). The chain is Probable nicotinate-nucleotide adenylyltransferase from Laribacter hongkongensis (strain HLHK9).